Here is a 371-residue protein sequence, read N- to C-terminus: MALNEEYTYVELEKEPYWPFEKLRISITGAGGFIASHIARRLKSEGHYIIASDWKKNEHMTEDMFCHEFHLVDLRVMDNCLKVTTGVDHVFNLAADMGGMGFIQSNHSVIMYNNTMISFNMLEAARINGVKRFFYASSACIYPEFKQLDTVVSLKESDAWPAEPQDAYGLEKLATEELCKHYTKDFGIECRVGRFHNIYGPFGTWKGGREKAPAAFCRKALTSTDRFEMWGDGLQTRSFTFIDECVEGVLRLTKSDFREPVNIGSDEMVSMNEMAEIVLSFENKQLPIHHIPGPEGVRGRNSDNTLIKEKLGWAPTMRLKDGLRITYFWIKEQLEKEKAEGVDLSAYGSSKVVQTQAPVQLGSLRAADGKE.

NAD(+) is bound by residues 29–55, Asp-53, and Asp-73; that span reads GAGGFIASHIARRLKSEGHYIIASDWK. Substrate contacts are provided by residues Gly-98 and 138–140; that span reads SAC. Positions 168 and 172 each coordinate NAD(+). The active-site Proton acceptor is Tyr-168. Substrate is bound by residues Asn-197, 210 to 212, Lys-219, 235 to 237, Arg-300, and Ser-350; these read EKA and QTR.

Belongs to the NAD(P)-dependent epimerase/dehydratase family. The cofactor is NAD(+).

The catalysed reaction is GDP-alpha-D-mannose = GDP-beta-L-gulose. It carries out the reaction GDP-beta-L-gulose = GDP-beta-L-galactose. It participates in cofactor biosynthesis; L-ascorbate biosynthesis via GDP-alpha-D-mannose pathway; L-ascorbate from GDP-alpha-D-mannose: step 1/5. Functionally, catalyzes a reversible epimerization of GDP-D-mannose that precedes the committed step in the biosynthesis of vitamin C (L-ascorbate), resulting in the hydrolysis of the highly energetic glycosyl-pyrophosphoryl linkage. Able to catalyze 2 distinct epimerization reactions and can release both GDP-L-galactose and GDP-L-gulose from GDP-mannose. The polypeptide is GDP-mannose 3,5-epimerase 2 (GME-2) (Oryza sativa subsp. japonica (Rice)).